We begin with the raw amino-acid sequence, 97 residues long: HssA/B-like protein 27 (97 aa).

The protein belongs to the hssA/B family.

This Dictyostelium discoideum (Social amoeba) protein is HssA/B-like protein 27 (hssl27).